The primary structure comprises 825 residues: Glycerol-3-phosphate acyltransferase (825 aa).

An HXXXXD motif motif is present at residues cysteine 306–methionine 311. Positions serine 802–glycine 825 are disordered.

This sequence belongs to the GPAT/DAPAT family.

It is found in the cell inner membrane. It catalyses the reaction sn-glycerol 3-phosphate + an acyl-CoA = a 1-acyl-sn-glycero-3-phosphate + CoA. Its pathway is phospholipid metabolism; CDP-diacylglycerol biosynthesis; CDP-diacylglycerol from sn-glycerol 3-phosphate: step 1/3. This Pectobacterium atrosepticum (strain SCRI 1043 / ATCC BAA-672) (Erwinia carotovora subsp. atroseptica) protein is Glycerol-3-phosphate acyltransferase.